The following is a 137-amino-acid chain: Bet1-like protein At4g14600 (137 aa).

Residues 1–113 (MASNPHRSGA…MSIIRSGNNH (113 aa)) lie on the Cytoplasmic side of the membrane. Residues 43–105 (DPMHSDLDDE…KNNIRKLNMS (63 aa)) form the t-SNARE coiled-coil homology domain. A helical; Anchor for type IV membrane protein membrane pass occupies residues 114-134 (IMHVVLFALLVFFVLYIWSKM). Topologically, residues 135-137 (FKR) are vesicular.

It belongs to the BET1 family.

The protein localises to the golgi apparatus membrane. It is found in the endoplasmic reticulum membrane. In terms of biological role, required for vesicular transport from the ER to the Golgi complex. Functions as a SNARE associated with ER-derived vesicles. The chain is Bet1-like protein At4g14600 from Arabidopsis thaliana (Mouse-ear cress).